The following is a 156-amino-acid chain: uncharacterized protein (156 aa).

The signal sequence occupies residues 1–27 (MKLLVLRLILIISTIFVLLNLSCMVNG). Asn20, Asn83, Asn103, Asn106, and Asn134 each carry an N-linked (GlcNAc...) asparagine glycan.

It localises to the secreted. This is an uncharacterized protein from Dictyostelium discoideum (Social amoeba).